We begin with the raw amino-acid sequence, 215 residues long: Cytochrome b6 (215 aa).

The chain crosses the membrane as a helical span at residues 32–52 (IFYCIGGITFTCFLVQVATGF). C35 serves as a coordination point for heme c. Positions 86 and 100 each coordinate heme b. The next 3 membrane-spanning stretches (helical) occupy residues 90–110 (ASMM…TGGF), 116–136 (LTWV…VTGY), and 186–206 (LHTF…FLMI). Residues H187 and H202 each contribute to the heme b site.

It belongs to the cytochrome b family. PetB subfamily. As to quaternary structure, the 4 large subunits of the cytochrome b6-f complex are cytochrome b6, subunit IV (17 kDa polypeptide, PetD), cytochrome f and the Rieske protein, while the 4 small subunits are PetG, PetL, PetM and PetN. The complex functions as a dimer. Heme b serves as cofactor. The cofactor is heme c.

It localises to the plastid. It is found in the chloroplast thylakoid membrane. Component of the cytochrome b6-f complex, which mediates electron transfer between photosystem II (PSII) and photosystem I (PSI), cyclic electron flow around PSI, and state transitions. The sequence is that of Cytochrome b6 from Chlorella vulgaris (Green alga).